We begin with the raw amino-acid sequence, 389 residues long: Putative sugar efflux transporter DR_1322 (389 aa).

Transmembrane regions (helical) follow at residues 10 to 30 (AVLL…LFAV), 34 to 54 (GMTP…AVLV), 69 to 89 (KPLV…LSGV), 96 to 116 (MATG…VFAF), 135 to 155 (VLRA…AAVL), 161 to 181 (SGVF…LLFI), 211 to 231 (GWVV…MVMF), 246 to 266 (VGFL…LFVL), 281 to 301 (LLLF…PLLI), 308 to 328 (AAVL…LMPG), 341 to 361 (SVVG…VFGY), and 363 to 383 (PVFL…LWAT).

This sequence belongs to the major facilitator superfamily. Set transporter family.

The protein resides in the cell membrane. In terms of biological role, involved in the efflux of sugars. The physiological role may be the detoxification of non-metabolizable sugar analogs. The chain is Putative sugar efflux transporter DR_1322 from Deinococcus radiodurans (strain ATCC 13939 / DSM 20539 / JCM 16871 / CCUG 27074 / LMG 4051 / NBRC 15346 / NCIMB 9279 / VKM B-1422 / R1).